Consider the following 76-residue polypeptide: Small ribosomal subunit protein eS17 (76 aa).

This sequence belongs to the eukaryotic ribosomal protein eS17 family.

This Metallosphaera sedula (strain ATCC 51363 / DSM 5348 / JCM 9185 / NBRC 15509 / TH2) protein is Small ribosomal subunit protein eS17.